Here is a 399-residue protein sequence, read N- to C-terminus: Telomeric repeat-binding factor 2-interacting protein 1 (399 aa).

At Ala2 the chain carries N-acetylalanine. Phosphoserine is present on residues Ser36 and Ser43. The region spanning 78–101 (FISTQYILDCVERNERLELEAYRL) is the BRCT domain. A disordered region spans residues 104 to 132 (ASAADTGSEAKPGALAEGAAEPEPQRHAG). Residues 112–125 (EAKPGALAEGAAEP) are compositionally biased toward low complexity. Lys114 is covalently cross-linked (Glycyl lysine isopeptide (Lys-Gly) (interchain with G-Cter in SUMO2)). A Myb-like domain is found at 128-188 (QRHAGRIAFT…SLKDRYLKHL (61 aa)). Ser154 and Ser156 each carry phosphoserine. A Glycyl lysine isopeptide (Lys-Gly) (interchain with G-Cter in SUMO2) cross-link involves residue Lys194. 2 disordered regions span residues 196 to 244 (LLGD…EEIQ) and 264 to 311 (VVVD…QPEV). 2 positions are modified to phosphoserine: Ser203 and Ser206. Residues Lys208, Lys212, and Lys240 each participate in a glycyl lysine isopeptide (Lys-Gly) (interchain with G-Cter in SUMO2) cross-link. Over residues 280–304 (CDDDPPTPEEDSETQPDEEEEEEEE) the composition is skewed to acidic residues. Residue Lys372 forms a Glycyl lysine isopeptide (Lys-Gly) (interchain with G-Cter in SUMO2) linkage. The Nuclear localization signal signature appears at 383–399 (KKFGAQNVARRIEFRKK).

It belongs to the RAP1 family. As to quaternary structure, associates with the I-kappa-B-kinase (IKK) core complex, composed of CHUK, IKBKB and IKBKG. Homodimer. Component of the shelterin complex (telosome) composed of TERF1, TERF2, TINF2, TERF2IP ACD and POT1. Interacts with TERF2; the interaction is direct. Does not interact with TERF1. Interacts with SLX4/BTBD12. As to expression, ubiquitous. Highly expressed.

The protein localises to the nucleus. It localises to the cytoplasm. Its subcellular location is the chromosome. The protein resides in the telomere. Functionally, acts both as a regulator of telomere function and as a transcription regulator. Involved in the regulation of telomere length and protection as a component of the shelterin complex (telosome). In contrast to other components of the shelterin complex, it is dispensible for telomere capping and does not participate in the protection of telomeres against non-homologous end-joining (NHEJ)-mediated repair. Instead, it is required to negatively regulate telomere recombination and is essential for repressing homology-directed repair (HDR), which can affect telomere length. Does not bind DNA directly: recruited to telomeric double-stranded 5'-TTAGGG-3' repeats via its interaction with TERF2. Independently of its function in telomeres, also acts as a transcription regulator: recruited to extratelomeric 5'-TTAGGG-3' sites via its association with TERF2 or other factors, and regulates gene expression. When cytoplasmic, associates with the I-kappa-B-kinase (IKK) complex and acts as a regulator of the NF-kappa-B signaling by promoting IKK-mediated phosphorylation of RELA/p65, leading to activate expression of NF-kappa-B target genes. This chain is Telomeric repeat-binding factor 2-interacting protein 1 (TERF2IP), found in Homo sapiens (Human).